A 216-amino-acid polypeptide reads, in one-letter code: Nicotinamidase (216 aa).

Residue Asp8 is part of the active site. Residues Asp51, His53, and His94 each contribute to the Zn(2+) site. Lys122 is a catalytic residue. Cys167 functions as the Nucleophile in the catalytic mechanism.

This sequence belongs to the isochorismatase family.

It is found in the cytoplasm. It localises to the nucleus. The protein resides in the peroxisome. It carries out the reaction nicotinamide + H2O = nicotinate + NH4(+). It participates in cofactor biosynthesis; nicotinate biosynthesis; nicotinate from nicotinamide: step 1/1. Its activity is regulated as follows. Inhibited by N-ethylmaleimide, HgCl(2) and PCMB. Competitively inhibited by NAD, NMN and 3-acetylpyridine. In terms of biological role, catalyzes the deamidation of nicotinamide, an early step in the NAD(+) salvage pathway. Positively regulates SIR2-mediated silencing and longevity by preventing the accumulation of intracellular nicotinamide, an inhibitor of SIR2, during times of stress. Also acts on nicotinyl hydroxamate. This is Nicotinamidase (PNC1) from Saccharomyces cerevisiae (strain ATCC 204508 / S288c) (Baker's yeast).